The chain runs to 214 residues: 3,4-dihydroxy-2-butanone 4-phosphate synthase (214 aa).

Residues 37 to 38 (RE), aspartate 42, 150 to 154 (RRGHT), and glutamate 174 contribute to the D-ribulose 5-phosphate site. Position 38 (glutamate 38) interacts with Mg(2+). Residue histidine 153 participates in Mg(2+) binding.

This sequence belongs to the DHBP synthase family. Homodimer. It depends on Mg(2+) as a cofactor. Requires Mn(2+) as cofactor.

The catalysed reaction is D-ribulose 5-phosphate = (2S)-2-hydroxy-3-oxobutyl phosphate + formate + H(+). Its pathway is cofactor biosynthesis; riboflavin biosynthesis; 2-hydroxy-3-oxobutyl phosphate from D-ribulose 5-phosphate: step 1/1. Its function is as follows. Catalyzes the conversion of D-ribulose 5-phosphate to formate and 3,4-dihydroxy-2-butanone 4-phosphate. The protein is 3,4-dihydroxy-2-butanone 4-phosphate synthase of Histophilus somni (strain 2336) (Haemophilus somnus).